The following is a 71-amino-acid chain: Exodeoxyribonuclease 7 small subunit (71 aa).

It belongs to the XseB family. In terms of assembly, heterooligomer composed of large and small subunits.

It is found in the cytoplasm. It catalyses the reaction Exonucleolytic cleavage in either 5'- to 3'- or 3'- to 5'-direction to yield nucleoside 5'-phosphates.. Functionally, bidirectionally degrades single-stranded DNA into large acid-insoluble oligonucleotides, which are then degraded further into small acid-soluble oligonucleotides. The protein is Exodeoxyribonuclease 7 small subunit of Streptococcus agalactiae serotype Ia (strain ATCC 27591 / A909 / CDC SS700).